The primary structure comprises 545 residues: Pentatricopeptide repeat-containing protein At4g18840 (545 aa).

PPR repeat units lie at residues 104-138 (NGFT…PVFP), 139-173 (DKYS…GLVT), 174-204 (DVFV…MPVR), 205-239 (DAVS…NVES), 240-266 (WNFM…MPVR), 267-301 (DVVS…STEK), 303-337 (DGFT…GIEI), 338-368 (EGFL…TSKR), 369-403 (DVST…GFKP), 404-434 (NGIT…MSSV), and 440-474 (TIEH…EASI). Residues 475 to 545 (LLESLLGACK…ERVNRSLDVA (71 aa)) are type E motif.

It belongs to the PPR family. PCMP-E subfamily.

The chain is Pentatricopeptide repeat-containing protein At4g18840 (PCMP-E101) from Arabidopsis thaliana (Mouse-ear cress).